A 658-amino-acid polypeptide reads, in one-letter code: Translin-associated factor X-interacting protein 1 (658 aa).

Coiled coils occupy residues 144–184 (EISL…AEEY) and 230–295 (ALKM…LMQL).

In terms of assembly, interacts with TSNAX.

The protein localises to the cytoplasm. The protein resides in the perinuclear region. Functionally, possible role in spermatogenesis. The chain is Translin-associated factor X-interacting protein 1 from Homo sapiens (Human).